Here is a 483-residue protein sequence, read N- to C-terminus: Protein LMBR1L (483 aa).

The Extracellular segment spans residues 1 to 21 (MEVNQDVSVREQIFHDWVREC). The helical transmembrane segment at 22–42 (IICSLLFSTLYLLSYIVITKF) threads the bilayer. At 43–60 (KKHADFATVDVEDAAVNR) the chain is on the cytoplasmic side. Residues 61-81 (IALWMCTFTLAVSVGAVLLLP) form a helical membrane-spanning segment. The Extracellular segment spans residues 82-112 (FSIISNEVLLSVPHNYYIQWLNGSLIHGLWN). A helical transmembrane segment spans residues 113–133 (LVFLFSNLSLVFLMPFAYLFT). The Cytoplasmic portion of the chain corresponds to 134–153 (EAEGFAGSKKGVMSRVYETT). The helical transmembrane segment at 154 to 174 (VVLLLLTLLVFGIVWVASAIF) threads the bilayer. The Extracellular segment spans residues 175–194 (DDDSAGRESLYDLWEYYLPY). Residues 195–215 (LYSGISLFGVLLLLLCTPFGL) traverse the membrane as a helical segment. The Cytoplasmic portion of the chain corresponds to 216-294 (SRMFSVTGNL…RRRASPWQRN (79 aa)). The chain crosses the membrane as a helical span at residues 295–315 (LVYPLAMLLLLALTGITVLIV). Topologically, residues 316–342 (CVNVLELLIDEAAMPKGIQGSQLGKVS) are extracellular. Residues 343-363 (FSVFGSFGAAVQVILIFYLMA) form a helical membrane-spanning segment. The Cytoplasmic portion of the chain corresponds to 364–386 (SSVVGFYSSPLFIQLLPQKQNTP). A helical membrane pass occupies residues 387–407 (MTKIIGNCVSLLILSSALPVF). Residues 408-429 (SRTLGITRFDLLGDFGRFNWLG) lie on the Extracellular side of the membrane. A helical transmembrane segment spans residues 430–450 (NFYLILLYNMMFAGLATLCLV). The Cytoplasmic segment spans residues 451-483 (KKFTWAVQAELIRAFGLDRLPLSVKKIRSQGKA).

The protein belongs to the LIMR family. In terms of assembly, dimer. Can also form higher oligomers.

The protein localises to the cell membrane. Its subcellular location is the endoplasmic reticulum membrane. Functionally, may play a role in lymphocyte development by negatively regulating the canonical Wnt signaling pathway. May act as a LCN1 receptor. The polypeptide is Protein LMBR1L (lmbr1l) (Xenopus laevis (African clawed frog)).